The primary structure comprises 489 residues: Cysteine--tRNA ligase (489 aa).

Cys-27 serves as a coordination point for Zn(2+). A 'HIGH' region motif is present at residues 29–39 (VTVYDLCHLGH). Residues Cys-211, His-236, and Glu-240 each contribute to the Zn(2+) site. The 'KMSKS' region motif lies at 268–272 (KMSKS). Lys-271 contributes to the ATP binding site.

Belongs to the class-I aminoacyl-tRNA synthetase family. As to quaternary structure, monomer. Requires Zn(2+) as cofactor.

It localises to the cytoplasm. The catalysed reaction is tRNA(Cys) + L-cysteine + ATP = L-cysteinyl-tRNA(Cys) + AMP + diphosphate. This chain is Cysteine--tRNA ligase, found in Prochlorococcus marinus (strain AS9601).